A 141-amino-acid chain; its full sequence is HTH-type transcriptional regulator MntR (141 aa).

In terms of domain architecture, HTH dtxR-type spans 1 to 63 (MPTPSMEDYI…YEKYRGLVLT (63 aa)). D8, E11, H77, E99, E102, and H103 together coordinate Mn(2+).

The protein belongs to the DtxR/MntR family. Homodimer.

Its subcellular location is the cytoplasm. DNA binding is strongly activated by Mn(2+). In terms of biological role, central regulator of manganese homeostasis. The polypeptide is HTH-type transcriptional regulator MntR (Geobacillus kaustophilus (strain HTA426)).